A 332-amino-acid polypeptide reads, in one-letter code: Probable electron transfer flavoprotein subunit alpha, mitochondrial (332 aa).

275–303 (LYIAIGISGAIQHLAGMKDSKVIVAINKD) provides a ligand contact to FAD.

The protein belongs to the ETF alpha-subunit/FixB family. Heterodimer of an alpha and a beta subunit. The cofactor is FAD.

It localises to the mitochondrion matrix. Functionally, the electron transfer flavoprotein serves as a specific electron acceptor for several dehydrogenases, including five acyl-CoA dehydrogenases, glutaryl-CoA and sarcosine dehydrogenase. It transfers the electrons to the main mitochondrial respiratory chain via ETF-ubiquinone oxidoreductase (ETF dehydrogenase). The chain is Probable electron transfer flavoprotein subunit alpha, mitochondrial from Caenorhabditis elegans.